A 252-amino-acid chain; its full sequence is 2-succinyl-6-hydroxy-2,4-cyclohexadiene-1-carboxylate synthase (252 aa).

This sequence belongs to the AB hydrolase superfamily. MenH family. In terms of assembly, monomer.

It carries out the reaction 5-enolpyruvoyl-6-hydroxy-2-succinyl-cyclohex-3-ene-1-carboxylate = (1R,6R)-6-hydroxy-2-succinyl-cyclohexa-2,4-diene-1-carboxylate + pyruvate. It functions in the pathway quinol/quinone metabolism; 1,4-dihydroxy-2-naphthoate biosynthesis; 1,4-dihydroxy-2-naphthoate from chorismate: step 3/7. Its pathway is quinol/quinone metabolism; menaquinone biosynthesis. In terms of biological role, catalyzes a proton abstraction reaction that results in 2,5-elimination of pyruvate from 2-succinyl-5-enolpyruvyl-6-hydroxy-3-cyclohexene-1-carboxylate (SEPHCHC) and the formation of 2-succinyl-6-hydroxy-2,4-cyclohexadiene-1-carboxylate (SHCHC). In Escherichia coli (strain UTI89 / UPEC), this protein is 2-succinyl-6-hydroxy-2,4-cyclohexadiene-1-carboxylate synthase.